The chain runs to 164 residues: Peptidyl-prolyl cis-trans isomerase A (164 aa).

An N-acetylmethionine modification is found at Met-1. The residue at position 2 (Val-2) is an N-acetylvaline; in Peptidyl-prolyl cis-trans isomerase A, N-terminally processed. One can recognise a PPIase cyclophilin-type domain in the interval 7–163; that stretch reads FFDIAVDGEP…KKITIADCGQ (157 aa). Position 28 is an N6-acetyllysine; alternate (Lys-28). Residue Lys-28 forms a Glycyl lysine isopeptide (Lys-Gly) (interchain with G-Cter in SUMO2); alternate linkage. Lys-28 is covalently cross-linked (Glycyl lysine isopeptide (Lys-Gly) (interchain with G-Cter in ubiquitin); alternate). N6-acetyllysine is present on residues Lys-44 and Lys-76. The residue at position 77 (Ser-77) is a Phosphoserine. An N6-acetyllysine; alternate modification is found at Lys-82. Lys-82 participates in a covalent cross-link: Glycyl lysine isopeptide (Lys-Gly) (interchain with G-Cter in SUMO2); alternate. Thr-93 is subject to Phosphothreonine. The N-linked (GlcNAc...) asparagine glycan is linked to Asn-108. N6-acetyllysine is present on residues Lys-125, Lys-131, and Lys-133.

This sequence belongs to the cyclophilin-type PPIase family. PPIase A subfamily. Interacts with protein phosphatase PPP3CA/calcineurin A. Interacts with isoform 2 of BSG/CD147. Interacts with FOXO1; the interaction promotes FOXO1 dephosphorylation, nuclear accumulation and transcriptional activity. Interacts with integrin ITGA2B:ITGB3; the interaction is ROS and peptidyl-prolyl cis-trans isomerase (PPIase) activity-dependent and is increased in the presence of thrombin. Interacts with MAP3K5. Interacts with TARDBP; the interaction is dependent on the RNA-binding activity of TARDBP and the PPIase activity of PPIA/CYPA and the acetylation of PPIA/CYPA at Lys-125 favors the interaction. Interacts with HNRNPA1, HNRNPA2B1, HNRNPC, RBMX, HNRNPK and HNRNPM. In terms of processing, acetylation at Lys-125 markedly inhibits catalysis of cis to trans isomerization. PPIA acetylation also antagonizes the immunosuppressive effects of cyclosporine by inhibiting the sequential steps of cyclosporine binding and calcineurin inhibition. Acetylation at Lys-125 favors the interaction with TARDBP.

The protein localises to the cytoplasm. It is found in the secreted. The protein resides in the nucleus. The catalysed reaction is [protein]-peptidylproline (omega=180) = [protein]-peptidylproline (omega=0). With respect to regulation, binds cyclosporin A (CsA). CsA mediates some of its effects via an inhibitory action on PPIase. Functionally, catalyzes the cis-trans isomerization of proline imidic peptide bonds in oligopeptides. Exerts a strong chemotactic effect on leukocytes partly through activation of one of its membrane receptors BSG/CD147, initiating a signaling cascade that culminates in MAPK/ERK activation. Activates endothelial cells (ECs) in a proinflammatory manner by stimulating activation of NF-kappa-B and ERK, JNK and p38 MAP-kinases and by inducing expression of adhesion molecules including SELE and VCAM1. Induces apoptosis in ECs by promoting the FOXO1-dependent expression of CCL2 and BCL2L11 which are involved in EC chemotaxis and apoptosis. In response to oxidative stress, initiates proapoptotic and antiapoptotic signaling in ECs via activation of NF-kappa-B and AKT1 and up-regulation of antiapoptotic protein BCL2. Negatively regulates MAP3K5/ASK1 kinase activity, autophosphorylation and oxidative stress-induced apoptosis mediated by MAP3K5/ASK1. Necessary for the assembly of TARDBP in heterogeneous nuclear ribonucleoprotein (hnRNP) complexes and regulates TARDBP binding to RNA UG repeats and TARDBP-dependent expression of HDAC6, ATG7 and VCP which are involved in clearance of protein aggregates. Plays an important role in platelet activation and aggregation. Regulates calcium mobilization and integrin ITGA2B:ITGB3 bidirectional signaling via increased ROS production as well as by facilitating the interaction between integrin and the cell cytoskeleton. Binds heparan sulfate glycosaminoglycans. This is Peptidyl-prolyl cis-trans isomerase A (PPIA) from Saguinus oedipus (Cotton-top tamarin).